Reading from the N-terminus, the 184-residue chain is MSIPDTEIPVDDDGYDENGYDRPSKSQVKREMHALLDLGKQLIELSPERLRQLPLEERLYEAIRTAQRTTGREGRRRQIHFVGKLMRAAPADDIRRQLDVWENGSREETAAMHRLEGLRERLIADDEALTELLSRYPGADVQHLRAVIRAARKEAQQNAALLQGQEPQRKQYRALFQALKSLTQ.

The tract at residues 1-27 (MSIPDTEIPVDDDGYDENGYDRPSKSQ) is disordered. Acidic residues predominate over residues 8-18 (IPVDDDGYDEN).

Belongs to the DarP family.

The protein localises to the cytoplasm. Functionally, member of a network of 50S ribosomal subunit biogenesis factors which assembles along the 30S-50S interface, preventing incorrect 23S rRNA structures from forming. Promotes peptidyl transferase center (PTC) maturation. This Bordetella avium (strain 197N) protein is Dual-action ribosomal maturation protein DarP.